A 65-amino-acid chain; its full sequence is UPF0434 protein VFMJ11_A0475 (65 aa).

The protein belongs to the UPF0434 family.

In Aliivibrio fischeri (strain MJ11) (Vibrio fischeri), this protein is UPF0434 protein VFMJ11_A0475.